The sequence spans 237 residues: Flagellar L-ring protein (237 aa).

The N-terminal stretch at 1–24 is a signal peptide; it reads MNRLSVPRFSVLIASLCGITLLSG. C25 carries N-palmitoyl cysteine lipidation. The S-diacylglycerol cysteine moiety is linked to residue C25.

This sequence belongs to the FlgH family. As to quaternary structure, the basal body constitutes a major portion of the flagellar organelle and consists of four rings (L,P,S, and M) mounted on a central rod.

It is found in the cell outer membrane. It localises to the bacterial flagellum basal body. In terms of biological role, assembles around the rod to form the L-ring and probably protects the motor/basal body from shearing forces during rotation. This chain is Flagellar L-ring protein, found in Pseudomonas syringae pv. syringae (strain B728a).